Here is a 427-residue protein sequence, read N- to C-terminus: Protein TIFY 6a (427 aa).

A compositionally biased stretch (basic and acidic residues) spans 1–25 (MERDFLGAIWRKEEAAGKPEEHSDY). Disordered regions lie at residues 1-32 (MERD…GGGA) and 128-154 (YGVA…HANP). Residues 136–146 (FPSPSPSPRHP) are compositionally biased toward pro residues. Positions 196–231 (QNPKVTQMTIFYDGLVNVFDNIPVEKAQELMLLASR) constitute a Tify domain. The interval 296–327 (SFSSSNDSAGPKSGGLPLAVTPLSQASPSQPI) is disordered. The span at 317-327 (PLSQASPSQPI) shows a compositional bias: polar residues. Residues 343–367 (PQARKASLARFLEKRKERVSSVAPY) carry the Jas motif. Residues 345-352 (ARKASLAR) carry the Nuclear localization signal motif. Residues 361–427 (VSSVAPYPSS…QEPPSTKLQI (67 aa)) are disordered. Polar residues-rich tracts occupy residues 369–402 (SSKS…NNCE) and 411–427 (RNIS…KLQI).

It belongs to the TIFY/JAZ family. In terms of assembly, interacts with COI1A. Interacts with COI1A and COI1B in a coronatine-dependent manner. Coronatine is an analog of jasmonoyl isoleucine (JA-Ile). Post-translationally, ubiquitinated. Targeted for degradation by the SCF(COI1) E3 ubiquitin ligase-proteasome pathway during jasmonate signaling.

It localises to the nucleus. Repressor of jasmonate responses. In Oryza sativa subsp. japonica (Rice), this protein is Protein TIFY 6a.